Reading from the N-terminus, the 459-residue chain is Ribulose bisphosphate carboxylase large chain (459 aa).

At lysine 4 the chain carries N6,N6,N6-trimethyllysine. Residues asparagine 113 and threonine 163 each coordinate substrate. The active-site Proton acceptor is the lysine 165. Lysine 167 contacts substrate. 3 residues coordinate Mg(2+): lysine 191, aspartate 193, and glutamate 194. Residue lysine 191 is modified to N6-carboxylysine. Histidine 284 serves as the catalytic Proton acceptor. Residues arginine 285, histidine 317, and serine 369 each contribute to the substrate site.

It belongs to the RuBisCO large chain family. Type I subfamily. Heterohexadecamer of 8 large chains and 8 small chains; disulfide-linked. The disulfide link is formed within the large subunit homodimers. Requires Mg(2+) as cofactor. The disulfide bond which can form in the large chain dimeric partners within the hexadecamer appears to be associated with oxidative stress and protein turnover.

It is found in the plastid. It localises to the chloroplast. The catalysed reaction is 2 (2R)-3-phosphoglycerate + 2 H(+) = D-ribulose 1,5-bisphosphate + CO2 + H2O. It catalyses the reaction D-ribulose 1,5-bisphosphate + O2 = 2-phosphoglycolate + (2R)-3-phosphoglycerate + 2 H(+). RuBisCO catalyzes two reactions: the carboxylation of D-ribulose 1,5-bisphosphate, the primary event in carbon dioxide fixation, as well as the oxidative fragmentation of the pentose substrate in the photorespiration process. Both reactions occur simultaneously and in competition at the same active site. The sequence is that of Ribulose bisphosphate carboxylase large chain from Garrya elliptica (Wavyleaf silktassel).